Here is a 324-residue protein sequence, read N- to C-terminus: Zinc finger C2HC domain-containing protein 1A (324 aa).

The C2HC/C3H-type 1 zinc-finger motif lies at aspartate 15–lysine 44. The Zn(2+) site is built by cysteine 19, cysteine 22, histidine 34, and cysteine 38. Residues threonine 43–lysine 83 form a disordered region. Residues threonine 48–glycine 58 are compositionally biased toward basic and acidic residues. A C2HC/C3H-type 2 zinc finger spans residues aspartate 118–arginine 147. Zn(2+) is bound by residues cysteine 122, cysteine 125, histidine 137, and cysteine 141. The interval serine 149–histidine 225 is disordered. Positions serine 176–serine 187 are enriched in low complexity. 2 stretches are compositionally biased toward polar residues: residues arginine 188–threonine 198 and lysine 206–proline 223. Residue serine 222 is modified to Phosphoserine. Threonine 243 bears the Phosphothreonine mark. The residue at position 291 (serine 291) is a Phosphoserine.

Belongs to the ZC2HC1 family. The cofactor is Zn(2+).

The protein is Zinc finger C2HC domain-containing protein 1A (Zc2hc1a) of Mus musculus (Mouse).